Here is a 207-residue protein sequence, read N- to C-terminus: MTMDGDSSTTDASQLGISADYIGGSHYVIQPHDDTEDSMNDHEDTNGSKESFREQDIYLPIANVARIMKNAIPQTGKIAKDAKECVQECVSEFISFITSEASERCHQEKRKTINGEDILFAMSTLGFDSYVEPLKLYLQKFREAMKGEKGIGGAVTATDGLSEELAEEAFTNQLPAGLITADGQQQNVMVYTTSYHQISGVQQIQFS.

Residues 1 to 52 (MTMDGDSSTTDASQLGISADYIGGSHYVIQPHDDTEDSMNDHEDTNGSKESF) form an a domain region. The disordered stretch occupies residues 27–52 (YVIQPHDDTEDSMNDHEDTNGSKESF). Residues 39–52 (MNDHEDTNGSKESF) show a composition bias toward basic and acidic residues. The segment at 53-142 (REQDIYLPIA…PLKLYLQKFR (90 aa)) is b domain. A DNA-binding region spans residues 59-65 (LPIANVA). The interval 86–97 (VQECVSEFISFI) is subunit association domain (SAD). Lys140 participates in a covalent cross-link: Glycyl lysine isopeptide (Lys-Gly) (interchain with G-Cter in ubiquitin). Positions 143-207 (EAMKGEKGIG…ISGVQQIQFS (65 aa)) are c domain.

Belongs to the NFYB/HAP3 subunit family. In terms of assembly, heterotrimeric transcription factor composed of three components, NF-YA, NF-YB and NF-YC. NF-YB and NF-YC must interact and dimerize for NF-YA association and DNA binding. Interacts with C1QBP. Post-translationally, monoubiquitination at Lys-140 plays an important role in transcriptional activation by allowing the deposition of histone H3 methylations as well as histone H2B monoubiquitination at 'Lys-121'.

It is found in the nucleus. Its function is as follows. Component of the sequence-specific heterotrimeric transcription factor (NF-Y) which specifically recognizes a 5'-CCAAT-3' box motif found in the promoters of its target genes. NF-Y can function as both an activator and a repressor, depending on its interacting cofactors. This is Nuclear transcription factor Y subunit beta (NFYB) from Equus caballus (Horse).